The sequence spans 839 residues: Mitochondrial 15S rRNA processing factor CCM1 (839 aa).

A mitochondrion-targeting transit peptide spans 1-59 (MLSLKSRGSWNVLRWIQVPRRTAVIPAKPSPMRRKRRRIKNVSSKDLDLRGIDPQDSRA). 2 PPR repeats span residues 313-347 (NREN…SSSH) and 350-384 (DVTT…QLQP).

Belongs to the CCM1 family. In terms of assembly, binds to mitochondrial small subunit 15S rRNA.

It localises to the mitochondrion. Functionally, regulates mitochondrial small subunit maturation by controlling 15S rRNA 5'-end processing. Localizes to the 5' precursor of the 15S rRNA in a position that is subsequently occupied by mS47 in the mature yeast mtSSU. Uses structure and sequence-specific RNA recognition, binding to a single-stranded region of the precursor and specifically recognizing bases -6 to -1. The exchange of Ccm1 for mS47 is coupled to the irreversible removal of precursor rRNA that is accompanied by conformational changes of the mitoribosomal proteins uS5m and mS26. These conformational changes signal completion of 5'-end rRNA processing through protection of the mature 5'-end of the 15S rRNA and stabilization of mS47. The removal of the 5' precursor together with the dissociation of Ccm1 may be catalyzed by the 5'-3' exoribonuclease Pet127. Involved in the specific removal of group I introns in mitochondrial encoded transcripts. This is Mitochondrial 15S rRNA processing factor CCM1 (CCM1) from Zygosaccharomyces rouxii (strain ATCC 2623 / CBS 732 / NBRC 1130 / NCYC 568 / NRRL Y-229).